Here is a 187-residue protein sequence, read N- to C-terminus: GTPase KRas (187 aa).

GTP is bound by residues 10 to 18, 29 to 35, 59 to 60, and 116 to 119; these read GAVGVGKSA, VDEYDPT, AG, and NKCA. The short motif at 32–40 is the Effector region element; it reads YDPTIEDSY. The segment at 168–187 is disordered; the sequence is EKMSKDGKKKKKSKTKCSIL. Cysteine 184 bears the Cysteine methyl ester mark. Residue cysteine 184 is the site of S-farnesyl cysteine attachment. Residues 185 to 187 constitute a propeptide, removed in mature form; that stretch reads SIL.

This sequence belongs to the small GTPase superfamily. Ras family.

It localises to the cell membrane. Its subcellular location is the cytoplasm. The enzyme catalyses GTP + H2O = GDP + phosphate + H(+). With respect to regulation, alternates between an inactive form bound to GDP and an active form bound to GTP. Activated by a guanine nucleotide-exchange factor (GEF) and inactivated by a GTPase-activating protein (GAP). Its function is as follows. Ras proteins bind GDP/GTP and possess intrinsic GTPase activity. Plays an important role in the regulation of cell proliferation. The polypeptide is GTPase KRas (kras) (Xenopus laevis (African clawed frog)).